A 344-amino-acid polypeptide reads, in one-letter code: Nicotinate-nucleotide--dimethylbenzimidazole phosphoribosyltransferase (344 aa).

E310 functions as the Proton acceptor in the catalytic mechanism.

This sequence belongs to the CobT family.

It catalyses the reaction 5,6-dimethylbenzimidazole + nicotinate beta-D-ribonucleotide = alpha-ribazole 5'-phosphate + nicotinate + H(+). Its pathway is nucleoside biosynthesis; alpha-ribazole biosynthesis; alpha-ribazole from 5,6-dimethylbenzimidazole: step 1/2. Catalyzes the synthesis of alpha-ribazole-5'-phosphate from nicotinate mononucleotide (NAMN) and 5,6-dimethylbenzimidazole (DMB). The protein is Nicotinate-nucleotide--dimethylbenzimidazole phosphoribosyltransferase of Shewanella amazonensis (strain ATCC BAA-1098 / SB2B).